We begin with the raw amino-acid sequence, 295 residues long: MNMLPDIETLETAAEGGSHPLFADVPSSVEFNKLRKRLLRLTRQAIEDFSMVEPGQRWLVALSGGKDSYGLLALLLDLKWRGLLPVELLACNLDQGQPNFPKHILPDYLNANGIAHRIEYQDTYSVVTNKLPEGSTYCSLCSRLRRGHLYRIAREEGCSALVLGHHREDILETFFMNLFHGGRLAAMPPKLLNDEGDVMVLRPLSYCAEIDLEKFAAAMRFPIIPCDLCGSQEGLQRNAMKAMLEDIEKRMPGRKDTMIRALSNTRPSHLLDRKLFDFAALNQTLITGQDASDDI.

The PP-loop motif signature appears at 63-68; that stretch reads SGGKDS. Cys138, Cys141, and Cys229 together coordinate [4Fe-4S] cluster.

This sequence belongs to the TtcA family. Homodimer. Requires Mg(2+) as cofactor. The cofactor is [4Fe-4S] cluster.

The protein resides in the cytoplasm. It carries out the reaction cytidine(32) in tRNA + S-sulfanyl-L-cysteinyl-[cysteine desulfurase] + AH2 + ATP = 2-thiocytidine(32) in tRNA + L-cysteinyl-[cysteine desulfurase] + A + AMP + diphosphate + H(+). The protein operates within tRNA modification. Its function is as follows. Catalyzes the ATP-dependent 2-thiolation of cytidine in position 32 of tRNA, to form 2-thiocytidine (s(2)C32). The sulfur atoms are provided by the cysteine/cysteine desulfurase (IscS) system. The polypeptide is tRNA-cytidine(32) 2-sulfurtransferase (Mesorhizobium japonicum (strain LMG 29417 / CECT 9101 / MAFF 303099) (Mesorhizobium loti (strain MAFF 303099))).